Reading from the N-terminus, the 181-residue chain is Large ribosomal subunit protein uL5 (181 aa).

Belongs to the universal ribosomal protein uL5 family. In terms of assembly, part of the 50S ribosomal subunit; part of the 5S rRNA/L5/L18/L25 subcomplex. Contacts the 5S rRNA and the P site tRNA. Forms a bridge to the 30S subunit in the 70S ribosome.

This is one of the proteins that bind and probably mediate the attachment of the 5S RNA into the large ribosomal subunit, where it forms part of the central protuberance. In the 70S ribosome it contacts protein S13 of the 30S subunit (bridge B1b), connecting the 2 subunits; this bridge is implicated in subunit movement. Contacts the P site tRNA; the 5S rRNA and some of its associated proteins might help stabilize positioning of ribosome-bound tRNAs. In Picosynechococcus sp. (strain ATCC 27264 / PCC 7002 / PR-6) (Agmenellum quadruplicatum), this protein is Large ribosomal subunit protein uL5.